The sequence spans 535 residues: Succinate-semialdehyde dehydrogenase, mitochondrial (535 aa).

Residues 1–47 constitute a mitochondrion transit peptide; it reads MATCFWLRSCGARRLGSTFPGCRLRPRAGGLVPASGPAPGPAQLRCY. Lysine 126 is modified (N6-acetyllysine; alternate). Lysine 126 is subject to N6-succinyllysine; alternate. N6-succinyllysine occurs at positions 135 and 184. Residues arginine 213 and 228-231 contribute to the NAD(+) site; that span reads KPAE. Arginine 213 contributes to the substrate binding site. Lysine 265 bears the N6-acetyllysine; alternate mark. Lysine 265 bears the N6-succinyllysine; alternate mark. 284-289 contributes to the NAD(+) binding site; the sequence is GSTTTG. Glutamate 306 acts as the Proton acceptor in catalysis. Arginine 334 is a binding site for substrate. Cysteine 340 (nucleophile) is an active-site residue. Residues cysteine 340 and cysteine 342 are joined by a disulfide bond. Lysine 365 is modified (N6-acetyllysine). Lysine 402 is modified (N6-succinyllysine). Lysine 411 carries the post-translational modification N6-acetyllysine. Serine 498 contributes to the substrate binding site. A Phosphoserine modification is found at serine 499.

It belongs to the aldehyde dehydrogenase family. Homotetramer.

It localises to the mitochondrion. It carries out the reaction succinate semialdehyde + NAD(+) + H2O = succinate + NADH + 2 H(+). Its pathway is amino-acid degradation; 4-aminobutanoate degradation. Redox-regulated. Inhibited under oxydizing conditions. Its function is as follows. Catalyzes one step in the degradation of the inhibitory neurotransmitter gamma-aminobutyric acid (GABA). This is Succinate-semialdehyde dehydrogenase, mitochondrial (ALDH5A1) from Hylobates lar (Lar gibbon).